A 1254-amino-acid polypeptide reads, in one-letter code: Structural polyprotein (1254 aa).

Residues 1 to 33 (MFPFQPMYPMQPMPYRNPFAAPRRPWFPRTDPF) are necessary for nucleocapsid assembly and virus assembly. Residues 33 to 68 (FLAMQVQELTRSMANLTFKQRRGAPPEGPPAKKSKR) form a host transcription inhibition region. Residues 41 to 48 (LTRSMANL) carry the Supraphysiological nuclear export signal motif. Asn47 carries an N-linked (GlcNAc...) asparagine; by host glycan. Residues 48 to 118 (LTFKQRRGAP…KKPGKRQRMV (71 aa)) are disordered. The short motif at 64 to 68 (KKSKR) is the Nuclear localization signal element. Over residues 76-91 (GGQRKKKKNEGKKKAK) the composition is skewed to basic residues. The interval 90–126 (AKTGPPNLKTQNGNKKKTNKKPGKRQRMVMKLESDKT) is binding to the viral RNA. 2 positions are modified to phosphothreonine: Thr92 and Thr107. The segment covering 103-117 (NKKKTNKKPGKRQRM) has biased composition (basic residues). Residues 111 to 125 (PGKRQRMVMKLESDK) form a ribosome-binding region. Residue Ser123 is modified to Phosphoserine. The Peptidase S3 domain maps to 125–274 (KTFPIMLEGK…KYTPENCEQW (150 aa)). Residue Thr126 is modified to Phosphothreonine. Catalysis depends on His151, which acts as the Charge relay system. The interaction with spike glycoprotein E2 stretch occupies residues 167–172 (KKASKY). Active-site charge relay system residues include Asp173 and Ser225. The interaction with spike glycoprotein E2 stretch occupies residues 259–263 (EKGVT). The functions as an uncleaved signal peptide for the precursor of protein E3/E2 stretch occupies residues 275–286 (SLVTTMCLLANV). At 275-702 (SLVTTMCLLA…YHRYPMSTIT (428 aa)) the chain is on the extracellular side. Disulfide bonds link Cys281–Cys290, Cys352–Cys456, Cys355–Cys360, Cys423–Cys437, Cys484–Cys599, Cys533–Cys559, and Cys535–Cys553. N-linked (GlcNAc...) asparagine; by host glycosylation is present at Asn285. 2 N-linked (GlcNAc...) asparagine; by host glycosylation sites follow: Asn545 and Asn651. Residues 703-723 (GLSICAAIVAVSIAASTWLLC) traverse the membrane as a helical segment. The interaction with the capsid protein stretch occupies residues 724-728 (RSRAS). The Cytoplasmic portion of the chain corresponds to 724–756 (RSRASCLTPYRLTPNAKMPLCLAVLCCARSARA). S-palmitoyl cysteine; by host attachment occurs at residues Cys729, Cys749, and Cys750. The cysteines at positions 729 and 750 are disulfide-linked. A transient transmembrane before p62-6K protein processing region spans residues 735-754 (LTPNAKMPLCLAVLCCARSA). At 757–768 (ETTWESLDHLWN) the chain is on the extracellular side. Residues 769-789 (NNQQMFWTQLLIPLAALIVVT) traverse the membrane as a helical segment. Arg790 is a topological domain (cytoplasmic). A helical membrane pass occupies residues 791–811 (LLKCMCCVVPFLVVAGAAGAG). Over 812 to 1224 (AYEHATTMPN…SKTAWTWLTS (413 aa)) the chain is Extracellular. 4 disulfide bridges follow: Cys861–Cys926, Cys874–Cys906, Cys875–Cys908, and Cys880–Cys890. Residues 896–913 (VYPFMWGGAYCFCDTENT) are E1 fusion peptide loop. 2 N-linked (GlcNAc...) asparagine; by host glycosylation sites follow: Asn946 and Asn1082. 4 disulfides stabilise this stretch: Cys1071–Cys1083, Cys1113–Cys1188, Cys1118–Cys1192, and Cys1140–Cys1182. A helical membrane pass occupies residues 1225–1245 (LLGGSAVIIIIGLVLATLVAM). Residues 1246–1254 (YVLTNQKHN) lie on the Cytoplasmic side of the membrane.

As to quaternary structure, homodimer. Homomultimer. Interacts with host karyopherin KPNA4; this interaction allows the nuclear import of the viral capsid protein. Interacts with spike glycoprotein E2. Interacts with host IRAK1; the interaction leads to inhibition of IRAK1-dependent signaling. Part of a tetrameric complex composed of host CRM1, host importin alpha/beta dimer and the viral capsid; this complex blocks the receptor-mediated transport through the nuclear pore. Interacts with host phosphatase PPP1CA; this interaction dephosphorylates the capsid protein, which increases its ability to bind to the viral genome. In terms of assembly, the precursor of protein E3/E2 and E1 form a heterodimer shortly after synthesis. Interacts with spike glycoprotein E2. The precursor of protein E3/E2 and E1 form a heterodimer shortly after synthesis. Processing of the precursor of protein E3/E2 into E2 and E3 results in a heterodimer of the spike glycoproteins E2 and E1. Spike at virion surface are constituted of three E2-E1 heterodimers. After target cell attachment and endocytosis, E1 change conformation to form homotrimers. Interacts with 6K protein. Interacts with host LDLRAD3; this interaction mediates viral entry to the host cell. As to quaternary structure, interacts with spike glycoprotein E1. Processing of the precursor of protein E3/E2 into E2 and E3 results in a heterodimer of the spike glycoproteins E2 and E1. Spike at virion surface are constituted of a trimer of E2-E1 heterodimers. Interacts with 6K protein. Interacts with host LDLRAD3; this interaction mediates viral entry to the host cell. In terms of assembly, oligomer. Interacts with spike glycoprotein E1. Interacts with spike glycoprotein E2. Post-translationally, structural polyprotein: Specific enzymatic cleavages in vivo yield mature proteins. Capsid protein is auto-cleaved during polyprotein translation, unmasking a signal peptide at the N-terminus of the precursor of E3/E2. The remaining polyprotein is then targeted to the host endoplasmic reticulum, where host signal peptidase cleaves it into pE2, 6K and E1 proteins. pE2 is further processed to mature E3 and E2 by host furin in trans-Golgi vesicle. In terms of processing, phosphorylated on serine and threonine residues. Palmitoylated via thioester bonds. These palmitoylations may induce disruption of the C-terminus transmembrane. This would result in the reorientation of E2 C-terminus from lumenal to cytoplasmic side. Post-translationally, N-glycosylated. In terms of processing, palmitoylated via thioester bonds.

Its subcellular location is the virion. The protein resides in the host cytoplasm. The protein localises to the host cell membrane. It is found in the host nucleus. It localises to the virion membrane. Its subcellular location is the host Golgi apparatus. The protein resides in the host trans-Golgi network. The protein localises to the host endoplasmic reticulum. The enzyme catalyses Autocatalytic release of the core protein from the N-terminus of the togavirus structural polyprotein by hydrolysis of a -Trp-|-Ser- bond.. Its function is as follows. Forms an icosahedral capsid with a T=4 symmetry composed of 240 copies of the capsid protein surrounded by a lipid membrane through which penetrate 80 spikes composed of trimers of E1-E2 heterodimers. The capsid protein binds to the viral RNA genome at a site adjacent to a ribosome binding site for viral genome translation following genome release. Possesses a protease activity that results in its autocatalytic cleavage from the nascent structural protein. Following its self-cleavage, the capsid protein transiently associates with ribosomes, and within several minutes the protein binds to viral RNA and rapidly assembles into icosahedric core particles. The resulting nucleocapsid eventually associates with the cytoplasmic domain of the spike glycoprotein E2 at the cell membrane, leading to budding and formation of mature virions. In case of infection, new virions attach to target cells and after clathrin-mediated endocytosis their membrane fuses with the host endosomal membrane. This leads to the release of the nucleocapsid into the cytoplasm, followed by an uncoating event necessary for the genomic RNA to become accessible. The uncoating might be triggered by the interaction of capsid proteins with ribosomes. Binding of ribosomes would release the genomic RNA since the same region is genomic RNA-binding and ribosome-binding. Specifically inhibits interleukin-1 receptor-associated kinase 1/IRAK1-dependent signaling during viral entry, representing a means by which the alphaviruses may evade innate immune detection and activation prior to viral gene expression. Inhibits host transcription. Forms a tetrameric complex with XPO1/CRM1 and the nuclear import receptor importin. This complex blocks the central channel of host nuclear pores thereby inhibiting the receptor-mediated nuclear transport and thus the host mRNA and rRNA transcription. The inhibition of transcription is linked to a cytopathic effect on the host cell. In terms of biological role, provides the signal sequence for the translocation of the precursor of protein E3/E2 to the host endoplasmic reticulum. Furin-cleaved E3 remains associated with spike glycoprotein E1 and mediates pH protection of the latter during the transport via the secretory pathway. After virion release from the host cell, the assembly protein E3 is gradually released in the extracellular space. Functionally, plays a role in viral attachment to target host cell, by binding to the cell receptor LDLRAD3. Synthesized as a p62 precursor which is processed by furin at the cell membrane just before virion budding, giving rise to E2-E1 heterodimer. The p62-E1 heterodimer is stable, whereas E2-E1 is unstable and dissociate at low pH. p62 is processed at the last step, presumably to avoid E1 fusion activation before its final export to cell surface. E2 C-terminus contains a transitory transmembrane that would be disrupted by palmitoylation, resulting in reorientation of the C-terminal tail from lumenal to cytoplasmic side. This step is critical since E2 C-terminus is involved in budding by interacting with capsid proteins. This release of E2 C-terminus in cytoplasm occurs lately in protein export, and precludes premature assembly of particles at the endoplasmic reticulum membrane. Acts as a viroporin that participates in virus glycoprotein processing and transport to the plasma membrane, cell permeabilization and budding of viral particles. Disrupts the calcium homeostasis of the cell, probably at the endoplasmic reticulum level. This leads to cytoplasmic calcium elevation. Because of its lipophilic properties, the 6K protein is postulated to influence the selection of lipids that interact with the transmembrane domains of the glycoproteins, which, in turn, affects the deformability of the bilayer required for the extreme curvature that occurs as budding proceeds. Present in low amount in virions, about 3% compared to viral glycoproteins. Its function is as follows. Class II viral fusion protein. Fusion activity is inactive as long as E1 is bound to E2 in mature virion. After virus attachment to cell receptor LDLRAD3 and endocytosis, acidification of the endosome induce dissociation of E1/E2 heterodimer and concomitant trimerization of the E1 subunits. This E1 trimer is fusion active, and promotes release of viral nucleocapsid in cytoplasm after endosome and viral membrane fusion. Efficient fusion requires the presence of cholesterol and sphingolipid in the target membrane. The protein is Structural polyprotein of Venezuelan equine encephalitis virus (strain Everglades Fe3-7c) (VEEV).